The chain runs to 1491 residues: Chromosome partition protein MukB (1491 aa).

34 to 41 contributes to the ATP binding site; sequence GGNGAGKS. Coiled-coil stretches lie at residues 302–418, 488–600, 638–666, 781–806, 836–1109, and 1210–1239; these read LIEQ…QYQQ, EVAR…RFES, ELEK…RLAS, RAAR…AKAS, EQAL…DLRT, and VEAI…ISSD. The interval 667–784 is flexible hinge; the sequence is PGGSNDPRLK…AIPLFGRAAR (118 aa). Residues 1059-1080 form a disordered region; that stretch reads QRRRDELQERLHTSRSRKSEYE.

This sequence belongs to the SMC family. MukB subfamily. As to quaternary structure, homodimerization via its hinge domain. Binds to DNA via its C-terminal region. Interacts, and probably forms a ternary complex, with MukE and MukF via its C-terminal region. The complex formation is stimulated by calcium or magnesium. Interacts with tubulin-related protein FtsZ.

The protein localises to the cytoplasm. It is found in the nucleoid. Plays a central role in chromosome condensation, segregation and cell cycle progression. Functions as a homodimer, which is essential for chromosome partition. Involved in negative DNA supercoiling in vivo, and by this means organize and compact chromosomes. May achieve or facilitate chromosome segregation by condensation DNA from both sides of a centrally located replisome during cell division. The polypeptide is Chromosome partition protein MukB (Vibrio cholerae serotype O1 (strain ATCC 39541 / Classical Ogawa 395 / O395)).